Reading from the N-terminus, the 117-residue chain is Immunoglobulin lambda variable 2 (117 aa).

The signal sequence occupies residues 1–19; that stretch reads MAWTSLILSLLALCSGASS. At Gln-20 the chain carries Pyrrolidone carboxylic acid. One can recognise an Ig-like domain in the interval 20–117; that stretch reads QAVVTQESAL…FCALWYSTHF (98 aa).

The chain is Immunoglobulin lambda variable 2 from Mus musculus (Mouse).